The chain runs to 420 residues: Tyrosine--tRNA ligase (420 aa).

Residue Tyr-36 participates in L-tyrosine binding. Positions 41 to 50 (PTADSMHIGH) match the 'HIGH' region motif. Residues Tyr-170 and Gln-174 each coordinate L-tyrosine. Positions 231 to 235 (KFGKS) match the 'KMSKS' region motif. Lys-234 serves as a coordination point for ATP. The 68-residue stretch at 353 to 420 (TNIVDFIVEA…KKKYFMVKYK (68 aa)) folds into the S4 RNA-binding domain.

The protein belongs to the class-I aminoacyl-tRNA synthetase family. TyrS type 1 subfamily. As to quaternary structure, homodimer.

The protein localises to the cytoplasm. The catalysed reaction is tRNA(Tyr) + L-tyrosine + ATP = L-tyrosyl-tRNA(Tyr) + AMP + diphosphate + H(+). In terms of biological role, catalyzes the attachment of tyrosine to tRNA(Tyr) in a two-step reaction: tyrosine is first activated by ATP to form Tyr-AMP and then transferred to the acceptor end of tRNA(Tyr). The sequence is that of Tyrosine--tRNA ligase from Staphylococcus carnosus (strain TM300).